Reading from the N-terminus, the 170-residue chain is ATP synthase subunit b (170 aa).

Residues 11–31 (GLNTGDIIFQLIAMLILLALL) traverse the membrane as a helical segment.

This sequence belongs to the ATPase B chain family. As to quaternary structure, F-type ATPases have 2 components, F(1) - the catalytic core - and F(0) - the membrane proton channel. F(1) has five subunits: alpha(3), beta(3), gamma(1), delta(1), epsilon(1). F(0) has three main subunits: a(1), b(2) and c(10-14). The alpha and beta chains form an alternating ring which encloses part of the gamma chain. F(1) is attached to F(0) by a central stalk formed by the gamma and epsilon chains, while a peripheral stalk is formed by the delta and b chains.

The protein localises to the cell membrane. In terms of biological role, f(1)F(0) ATP synthase produces ATP from ADP in the presence of a proton or sodium gradient. F-type ATPases consist of two structural domains, F(1) containing the extramembraneous catalytic core and F(0) containing the membrane proton channel, linked together by a central stalk and a peripheral stalk. During catalysis, ATP synthesis in the catalytic domain of F(1) is coupled via a rotary mechanism of the central stalk subunits to proton translocation. Its function is as follows. Component of the F(0) channel, it forms part of the peripheral stalk, linking F(1) to F(0). The polypeptide is ATP synthase subunit b (Bacillus pumilus (strain SAFR-032)).